The primary structure comprises 187 residues: uncharacterized protein (187 aa).

The first 28 residues, 1 to 28 (MRLHRTNNSRRCTILLILALKIFDFVDT), serve as a signal peptide directing secretion. Residues Asn58, Asn70, Asn156, and Asn168 are each glycosylated (N-linked (GlcNAc...) asparagine).

The protein resides in the secreted. This is an uncharacterized protein from Caenorhabditis elegans.